Reading from the N-terminus, the 444-residue chain is Xylose isomerase (444 aa).

Residues His101 and Asp104 contribute to the active site. Glu232, Glu268, His271, Asp296, Asp307, Asp309, and Asp339 together coordinate Mg(2+).

The protein belongs to the xylose isomerase family. In terms of assembly, homotetramer. Mg(2+) is required as a cofactor.

Its subcellular location is the cytoplasm. It carries out the reaction alpha-D-xylose = alpha-D-xylulofuranose. The chain is Xylose isomerase from Thermotoga petrophila (strain ATCC BAA-488 / DSM 13995 / JCM 10881 / RKU-1).